The following is a 1252-amino-acid chain: DNA-directed RNA polymerase subunit beta (1252 aa).

It belongs to the RNA polymerase beta chain family. In terms of assembly, the RNAP catalytic core consists of 2 alpha, 1 beta, 1 beta' and 1 omega subunit. When a sigma factor is associated with the core the holoenzyme is formed, which can initiate transcription.

It carries out the reaction RNA(n) + a ribonucleoside 5'-triphosphate = RNA(n+1) + diphosphate. In terms of biological role, DNA-dependent RNA polymerase catalyzes the transcription of DNA into RNA using the four ribonucleoside triphosphates as substrates. The sequence is that of DNA-directed RNA polymerase subunit beta from Chlamydia caviae (strain ATCC VR-813 / DSM 19441 / 03DC25 / GPIC) (Chlamydophila caviae).